The following is a 467-amino-acid chain: Chromosomal replication initiator protein DnaA (467 aa).

The interval 1–90 is domain I, interacts with DnaA modulators; it reads MSLSLWQQCL…KSVTQTPQAA (90 aa). A domain II region spans residues 91 to 130; that stretch reads VTSNVAAPAQVAQTQPQRAAPSTRSGWDNVPAPAEPTYRS. Residues 97 to 111 are compositionally biased toward low complexity; sequence APAQVAQTQPQRAAP. Residues 97-119 are disordered; it reads APAQVAQTQPQRAAPSTRSGWDN. A domain III, AAA+ region region spans residues 131–347; sequence NVNVKHTFDN…GALNRVIANA (217 aa). Positions 175, 177, 178, and 179 each coordinate ATP. The domain IV, binds dsDNA stretch occupies residues 348–467; sequence NFTGRAITID…FSNLIRTLSS (120 aa).

The protein belongs to the DnaA family. As to quaternary structure, oligomerizes as a right-handed, spiral filament on DNA at oriC.

The protein localises to the cytoplasm. Functionally, plays an essential role in the initiation and regulation of chromosomal replication. ATP-DnaA binds to the origin of replication (oriC) to initiate formation of the DNA replication initiation complex once per cell cycle. Binds the DnaA box (a 9 base pair repeat at the origin) and separates the double-stranded (ds)DNA. Forms a right-handed helical filament on oriC DNA; dsDNA binds to the exterior of the filament while single-stranded (ss)DNA is stabiized in the filament's interior. The ATP-DnaA-oriC complex binds and stabilizes one strand of the AT-rich DNA unwinding element (DUE), permitting loading of DNA polymerase. After initiation quickly degrades to an ADP-DnaA complex that is not apt for DNA replication. Binds acidic phospholipids. The chain is Chromosomal replication initiator protein DnaA from Escherichia coli O157:H7.